The following is a 314-amino-acid chain: Replication initiation protein (314 aa).

A compositionally biased stretch (basic and acidic residues) spans 1–18 (MSKKAEEIQAKQSLEKEN). The segment at 1–25 (MSKKAEEIQAKQSLEKENSNFSKTG) is disordered.

Belongs to the plasmid replication initiation factor family.

Its function is as follows. This protein is probably a specific topoisomerase involved in initiating replication. This protein is specifically required and may be rate-limiting for replication of the plasmid in vivo. This chain is Replication initiation protein (repE), found in Staphylococcus aureus.